The sequence spans 76 residues: MQLVLAAKYIGAGISTIGLLGAGIGIAIVFAALIQGVSRNPSMKDTLFQFAILGFAISEATGLFCLMISFLLLYGV.

Helical transmembrane passes span 13-35 and 50-72; these read GISTIGLLGAGIGIAIVFAALIQ and FAILGFAISEATGLFCLMISFLL.

The protein belongs to the ATPase C chain family. F-type ATPases have 2 components, CF(1) - the catalytic core - and CF(0) - the membrane proton channel. In yeast, the dimeric form of ATP synthase consists of 18 polypeptides: alpha, beta, gamma, delta, epsilon, 4 (B), 5 (OSCP), 6 (A), 8, 9 (C), d, E (Tim11), f, g, h, i, j and k.

Its subcellular location is the mitochondrion membrane. In terms of biological role, mitochondrial membrane ATP synthase (F(1)F(0) ATP synthase or Complex V) produces ATP from ADP in the presence of a proton gradient across the membrane which is generated by electron transport complexes of the respiratory chain. F-type ATPases consist of two structural domains, F(1) - containing the extramembraneous catalytic core and F(0) - containing the membrane proton channel, linked together by a central stalk and a peripheral stalk. During catalysis, ATP synthesis in the catalytic domain of F(1) is coupled via a rotary mechanism of the central stalk subunits to proton translocation. Part of the complex F(0) domain. A homomeric c-ring of probably 10 subunits is part of the complex rotary element. The polypeptide is ATP synthase subunit 9, mitochondrial (ATP9) (Eremothecium gossypii (strain ATCC 10895 / CBS 109.51 / FGSC 9923 / NRRL Y-1056) (Yeast)).